The primary structure comprises 733 residues: E3 ubiquitin-protein ligase COP1 (733 aa).

Positions Met-1–Ser-43 are disordered. A Nuclear localization signal 1 motif is present at residues Ser-111 to Arg-115. An RING-type zinc finger spans residues Cys-138–Asn-176. Positions Lys-197 to Lys-208 match the Nuclear localization signal 2 motif. Residues Asp-231–Ser-306 adopt a coiled-coil conformation. The short motif at Leu-237–Leu-247 is the Nuclear export signal element. Residues Pro-307 to Ile-327 form a disordered region. WD repeat units lie at residues Asn-421–Val-460, Thr-470–Val-510, Glu-513–Ser-553, Glu-555–Met-595, Gly-599–Ser-637, Gly-640–Thr-679, and Glu-695–Glu-731. Positions Lys-645–Phe-647 are interaction with TRIB1.

This sequence belongs to the COP1 family. As to quaternary structure, homodimer. Homodimerization is mediated by the coiled coil domain. Component of the DCX DET1-COP1 ubiquitin ligase complex at least composed of RBX1, DET1, DDB1, CUL4A and COP1. Isoform 2 does not interact with CUL4A but still binds to RBX1, suggesting that the interaction may be mediated by another cullin protein. Isoform 1 and isoform 2 interact with CUL5 but not with CUL1, CUL2 not CUL3. Interacts with bZIP transcription factors JUN, JUNB and JUND but not with FOS, ATF2 nor XBP1. Interacts with p53 (TP53). Interacts with COPS6; this interaction stabilizes RFWD2 through reducing its auto-ubiquitination and decelerating its turnover rate. Interacts with SFN; this interaction leads to SFN degradation. Interacts with p53/TP53 and MTA1. Interacts with TRIB1 (via C-terminus) and TRIB2.

It is found in the nucleus speckle. It localises to the cytoplasm. It catalyses the reaction S-ubiquitinyl-[E2 ubiquitin-conjugating enzyme]-L-cysteine + [acceptor protein]-L-lysine = [E2 ubiquitin-conjugating enzyme]-L-cysteine + N(6)-ubiquitinyl-[acceptor protein]-L-lysine.. It participates in protein modification; protein ubiquitination. TRIB1 competes with substrates for RFWD2 binding. Functionally, E3 ubiquitin-protein ligase that mediates ubiquitination and subsequent proteasomal degradation of target proteins. E3 ubiquitin ligases accept ubiquitin from an E2 ubiquitin-conjugating enzyme in the form of a thioester and then directly transfers the ubiquitin to targeted substrates. Involved in JUN ubiquitination and degradation. Directly involved in p53 (TP53) ubiquitination and degradation, thereby abolishing p53-dependent transcription and apoptosis. Ubiquitinates p53 independently of MDM2 or RCHY1. Probably mediates E3 ubiquitin ligase activity by functioning as the essential RING domain subunit of larger E3 complexes. In contrast, it does not constitute the catalytic RING subunit in the DCX DET1-COP1 complex that negatively regulates JUN, the ubiquitin ligase activity being mediated by RBX1. Involved in 14-3-3 protein sigma/SFN ubiquitination and proteasomal degradation, leading to AKT activation and promotion of cell survival. Ubiquitinates MTA1 leading to its proteasomal degradation. Upon binding to TRIB1, ubiquitinates CEBPA, which lacks a canonical COP1-binding motif. This is E3 ubiquitin-protein ligase COP1 from Mus musculus (Mouse).